The chain runs to 159 residues: MSSDDQHIREIRVHPIENGTVIDHINAGQALNVLKILNIPTSSSRVVSVLINAPSVHGRKDVVKIEGRELNVEEVDKIALIAPNATINIIRDFEVSDKDIVHIHSQIEGVVRCINPNCISNSNEPVTSKFAVSSNGQRTILRCSYCERIISDDIGEHLL.

Zn(2+) is bound by residues C113, C118, C143, and C146.

Belongs to the PyrI family. In terms of assembly, contains catalytic and regulatory chains. Zn(2+) is required as a cofactor.

In terms of biological role, involved in allosteric regulation of aspartate carbamoyltransferase. This Methanococcoides burtonii (strain DSM 6242 / NBRC 107633 / OCM 468 / ACE-M) protein is Aspartate carbamoyltransferase regulatory chain.